The chain runs to 464 residues: Synaptosomal-associated protein 47 (464 aa).

Residues 20–42 are disordered; it reads GRLWDSSGVPQRQKRPGPWRTQT. T-SNARE coiled-coil homology domains follow at residues 154 to 216 and 401 to 463; these read VADA…LTEL and TSLP…MKRL.

This sequence belongs to the SVAP1 family. Forms a complex containing SNAP47, VAMP2 and STX1A. Associates with the BLOC-1 complex. Interacts with BLOC1S6.

It is found in the endomembrane system. It localises to the cytoplasm. The protein localises to the perinuclear region. Functionally, plays a role in intracellular membrane fusion. In Homo sapiens (Human), this protein is Synaptosomal-associated protein 47 (SNAP47).